A 61-amino-acid chain; its full sequence is Small ribosomal subunit protein uS14 (61 aa).

Residues Cys24, Cys27, Cys40, and Cys43 each contribute to the Zn(2+) site.

The protein belongs to the universal ribosomal protein uS14 family. Zinc-binding uS14 subfamily. As to quaternary structure, part of the 30S ribosomal subunit. Contacts proteins S3 and S10. Zn(2+) serves as cofactor.

Its function is as follows. Binds 16S rRNA, required for the assembly of 30S particles and may also be responsible for determining the conformation of the 16S rRNA at the A site. The sequence is that of Small ribosomal subunit protein uS14 from Clostridium perfringens (strain ATCC 13124 / DSM 756 / JCM 1290 / NCIMB 6125 / NCTC 8237 / Type A).